The following is a 232-amino-acid chain: Homeobox protein SAX-1 (232 aa).

3 disordered regions span residues C1–K64, K122–A150, and L185–S208. A DNA-binding region (homeobox) is located at residues P65–H124. Low complexity predominate over residues G126–S142.

It belongs to the NK-1 homeobox family. In terms of tissue distribution, transiently expressed in the birth zone of the whole spinal cord regardless of the axial level.

It localises to the nucleus. This is Homeobox protein SAX-1 (SAX1) from Gallus gallus (Chicken).